The primary structure comprises 316 residues: Nod factor export ATP-binding protein I (316 aa).

The region spanning I18–Y248 is the ABC transporter domain. An ATP-binding site is contributed by G50–S57.

This sequence belongs to the ABC transporter superfamily. Lipooligosaccharide exporter (TC 3.A.1.102) family. The complex is composed of two ATP-binding proteins (NodI) and two transmembrane proteins (NodJ).

It localises to the cell inner membrane. Part of the ABC transporter complex NodIJ involved in the export of the nodulation factors (Nod factors), the bacterial signal molecules that induce symbiosis and subsequent nodulation induction. Nod factors are LCO (lipo-chitin oligosaccharide), a modified beta-1,4-linked N-acetylglucosamine oligosaccharide. This subunit is responsible for energy coupling to the transport system. The chain is Nod factor export ATP-binding protein I from Rhizobium etli (strain ATCC 51251 / DSM 11541 / JCM 21823 / NBRC 15573 / CFN 42).